Consider the following 307-residue polypeptide: Porphobilinogen deaminase (307 aa).

Cysteine 241 carries the S-(dipyrrolylmethanemethyl)cysteine modification.

The protein belongs to the HMBS family. In terms of assembly, monomer. Requires dipyrromethane as cofactor.

It carries out the reaction 4 porphobilinogen + H2O = hydroxymethylbilane + 4 NH4(+). Its pathway is porphyrin-containing compound metabolism; protoporphyrin-IX biosynthesis; coproporphyrinogen-III from 5-aminolevulinate: step 2/4. In terms of biological role, tetrapolymerization of the monopyrrole PBG into the hydroxymethylbilane pre-uroporphyrinogen in several discrete steps. The sequence is that of Porphobilinogen deaminase from Coxiella burnetii (strain CbuK_Q154) (Coxiella burnetii (strain Q154)).